A 404-amino-acid chain; its full sequence is Serine/threonine transporter SstT (404 aa).

A run of 9 helical transmembrane segments spans residues 17–37 (IGIG…VTAI), 44–64 (FVGA…VQAI), 75–95 (ITLI…VAVI), 138–158 (ALAT…GLAL), 179–199 (IVVW…FSTV), 212–232 (LLIL…NPLL), 287–307 (IPLG…VLTL), 319–339 (FLTA…ASGV), and 354–374 (FGIS…VGVI).

This sequence belongs to the dicarboxylate/amino acid:cation symporter (DAACS) (TC 2.A.23) family.

It localises to the cell membrane. It catalyses the reaction L-serine(in) + Na(+)(in) = L-serine(out) + Na(+)(out). The catalysed reaction is L-threonine(in) + Na(+)(in) = L-threonine(out) + Na(+)(out). In terms of biological role, involved in the import of serine and threonine into the cell, with the concomitant import of sodium (symport system). The chain is Serine/threonine transporter SstT from Streptococcus equi subsp. zooepidemicus (strain MGCS10565).